An 82-amino-acid polypeptide reads, in one-letter code: MFSSLKNKLNTFKSTLSLGVFLLFSAFANQALAAADAGLVTEVTKTLGTSKDTVIALGPLIMGVVGAIVLIVTVIGLIRKAK.

Residues 1–33 (MFSSLKNKLNTFKSTLSLGVFLLFSAFANQALA) form the signal peptide.

Its subcellular location is the secreted. The protein is Colonization factor (cep) of Vibrio cholerae serotype O1 (strain ATCC 39315 / El Tor Inaba N16961).